Here is a 374-residue protein sequence, read N- to C-terminus: WAT1-related protein At2g39510 (374 aa).

The next 10 membrane-spanning stretches (helical) occupy residues 9–29 (FITV…AKFA), 38–58 (VLAS…AYFL), 64–84 (PKMT…EPTI), 99–119 (TFTA…AWIF), 135–155 (ILGT…KGPL), 182–202 (GASL…LQAI), 212–232 (SLTA…ALFI), 249–269 (LAAV…QGVI), 284–304 (LSMV…MFLG), and 306–326 (ILGA…KSKD). EamA domains are found at residues 19-147 (YAGL…GAML) and 191-320 (ICWA…YSVL). The interval 350–374 (SKANAKMDTNDASVVISRPNTNESV) is disordered.

The protein belongs to the drug/metabolite transporter (DMT) superfamily. Plant drug/metabolite exporter (P-DME) (TC 2.A.7.4) family.

The protein resides in the membrane. This is WAT1-related protein At2g39510 from Arabidopsis thaliana (Mouse-ear cress).